The primary structure comprises 312 residues: Olfactory receptor 6C76 (312 aa).

Residues 1–23 (MKNRTSVTDFILLGLTDNPQLQV) lie on the Extracellular side of the membrane. Asn3 carries an N-linked (GlcNAc...) asparagine glycan. Residues 24-44 (VIFSFLFLTYVLSVTGNLTII) form a helical membrane-spanning segment. Residues 45 to 57 (SLTLLDSHLKTPM) are Cytoplasmic-facing. The helical transmembrane segment at 58-80 (YFFLRNFSLEISFTSVCNPRFLI) threads the bilayer. At 81 to 94 (SILTGDKSISYNAC) the chain is on the extracellular side. A disulfide bridge connects residues Cys94 and Cys176. The helical transmembrane segment at 95–115 (AAQLFFFIFLGSTEFFLLASM) threads the bilayer. At 116 to 142 (SYDCYVAICKPLHYTTIMSDRICYQLI) the chain is on the cytoplasmic side. Residues 143-163 (ISSWLAGFLVIFPPLAMGLQL) traverse the membrane as a helical segment. Topologically, residues 164–195 (DFCDSNVIDHFTCDSAPLLQISCTDTSTLELM) are extracellular. The chain crosses the membrane as a helical span at residues 196–216 (SFILALFTLISTLILVILSYT). The Cytoplasmic segment spans residues 217 to 238 (YIIRTILRIPSAQQRKKAFSTC). The chain crosses the membrane as a helical span at residues 239 to 259 (SSHVIVVSISYGSCIFMYVKT). Residues 260-267 (SAKEGVAL) are Extracellular-facing. The chain crosses the membrane as a helical span at residues 268–288 (TKGVAILNTSVAPMLNPFIYT). The Cytoplasmic segment spans residues 289 to 312 (LRNQQVKQAFKDVLRKISHKKKKH).

This sequence belongs to the G-protein coupled receptor 1 family.

The protein localises to the cell membrane. Odorant receptor. This Homo sapiens (Human) protein is Olfactory receptor 6C76 (OR6C76).